The following is a 1022-amino-acid chain: Leucine--tRNA ligase (1022 aa).

The 'HIGH' region motif lies at 47 to 57; it reads PYPNSPMHLGH. The 'KMSKS' region signature appears at 697 to 701; it reads KMSKS. Lysine 700 provides a ligand contact to ATP.

Belongs to the class-I aminoacyl-tRNA synthetase family.

Its subcellular location is the cytoplasm. It carries out the reaction tRNA(Leu) + L-leucine + ATP = L-leucyl-tRNA(Leu) + AMP + diphosphate. This is Leucine--tRNA ligase from Ignicoccus hospitalis (strain KIN4/I / DSM 18386 / JCM 14125).